Here is a 1487-residue protein sequence, read N- to C-terminus: Collagen alpha-1(II) chain (1487 aa).

A signal peptide spans 1 to 25 (MIRLGAPQSLVLLTLLIAAVLRCQG). Residues 26–181 (QDAQEAGSCL…PGLSAGNFAA (156 aa)) constitute a propeptide, N-terminal propeptide. In terms of domain architecture, VWFC spans 32–89 (GSCLQNGQRYKDKDVWKPSSCRICVCDTGNVLCDDIICEDPDCLNPEIPFGECCPICP). Positions 96–179 (SGKLGPKGQK…GPPGLSAGNF (84 aa)) are disordered. 2 stretches are compositionally biased toward basic and acidic residues: residues 104–115 (QKGEPGDIRDII) and 132–153 (PRGD…RDGE). The span at 157 to 172 (PGNPGPAGPPGPPGPP) shows a compositional bias: pro residues. The residue at position 190 (lysine 190) is a 5-hydroxylysine. O-linked (Gal...) hydroxylysine glycosylation is present at lysine 190. Residues 191-1237 (AGGAQMGVMQ…QREKGPDPMQ (1047 aa)) are disordered. Residues 192 to 203 (GGAQMGVMQGPM) show a composition bias toward low complexity. Positions 201–1214 (GPMGPMGPRG…PGPPGPPGPP (1014 aa)) are triple-helical region. The segment covering 208–217 (PRGPPGPAGA) has biased composition (pro residues). Residues 218–239 (PGPQGFQGNPGEPGEPGVSGPM) are compositionally biased toward low complexity. Basic and acidic residues predominate over residues 251–265 (PGDDGEAGKPGKSGE). 5-hydroxylysine is present on residues lysine 287, lysine 299, and lysine 308. O-linked (Gal...) hydroxylysine glycosylation is found at lysine 287, lysine 299, and lysine 308. Composition is skewed to low complexity over residues 310–320 (ESGSPGENGSP) and 335–350 (TGPA…DGQP). The span at 360-369 (GPAGGPGFPG) shows a compositional bias: gly residues. Composition is skewed to low complexity over residues 370–382 (APGA…PTGA) and 403–431 (PAGA…AGAP). Lysine 374 is subject to 5-hydroxylysine. O-linked (Gal...) hydroxylysine glycosylation occurs at lysine 374. Residues 433–442 (FPGPRGPPGP) show a composition bias toward pro residues. Residues 472 to 485 (ETGPAGPQGAPGPA) show a composition bias toward low complexity. 5-hydroxylysine occurs at positions 608 and 620. 2 O-linked (Gal...) hydroxylysine glycosylation sites follow: lysine 608 and lysine 620. Positions 622–631 (LAGAPGLRGL) are enriched in low complexity. A 4-hydroxyproline mark is found at proline 659 and proline 668. Proline 670 bears the 3-hydroxyproline mark. A 4-hydroxyproline mark is found at proline 671 and proline 674. Residues 706 to 736 (ERGSPGAQGLQGPRGLPGTPGTDGPKGAAGP) show a composition bias toward low complexity. Positions 764–775 (KGDRGDVGEKGP) are enriched in basic and acidic residues. Composition is skewed to low complexity over residues 833–848 (AGFA…PGAK) and 877–914 (PTGV…NGNP). Proline 907 carries the 3-hydroxyproline modification. 3 positions are modified to 4-hydroxyproline: proline 908, proline 914, and proline 920. The span at 962-980 (DGPSGLDGPPGPQGLAGQR) shows a compositional bias: low complexity. The span at 1069–1079 (APGPPGSPGPA) shows a compositional bias: pro residues. The span at 1115–1129 (RGDKGESGEQGERGL) shows a compositional bias: basic and acidic residues. Proline 1144 bears the 3-hydroxyproline mark. Composition is skewed to low complexity over residues 1148-1157 (SGDQGASGPA) and 1171-1181 (PSGKDGSNGIP). Proline 1181 carries the post-translational modification 4-hydroxyproline. Proline 1186 carries the post-translational modification 3-hydroxyproline. Position 1187 is a 4-hydroxyproline (proline 1187). Residues 1199–1216 (VGPPGSPGPPGPPGPPGP) are compositionally biased toward pro residues. At proline 1201 the chain carries 3-hydroxyproline. 4-hydroxyproline occurs at positions 1202 and 1205. Position 1207 is a 3-hydroxyproline (proline 1207). A 4-hydroxyproline mark is found at proline 1208 and proline 1211. Proline 1213 carries the 3-hydroxyproline modification. Position 1214 is a 4-hydroxyproline (proline 1214). Residues 1215–1241 (GPGIDMSAFAGLGQREKGPDPMQYMRA) are nonhelical region (C-terminal). In terms of domain architecture, Fibrillar collagen NC1 spans 1253–1487 (VEVDATLKSL…GVDIGPVCFL (235 aa)). 3 disulfide bridges follow: cysteine 1283–cysteine 1315, cysteine 1323–cysteine 1485, and cysteine 1393–cysteine 1438. Residues aspartate 1301, asparagine 1303, glutamine 1304, cysteine 1306, and aspartate 1309 each coordinate Ca(2+).

This sequence belongs to the fibrillar collagen family. In terms of assembly, homotrimers of alpha 1(II) chains. Post-translationally, contains mostly 4-hydroxyproline. Prolines at the third position of the tripeptide repeating unit (G-X-P) are 4-hydroxylated in some or all of the chains. Contains 3-hydroxyproline at a few sites. This modification occurs on the first proline residue in the sequence motif Gly-Pro-Hyp, where Hyp is 4-hydroxyproline. In terms of processing, lysine residues at the third position of the tripeptide repeating unit (G-X-Y) are 5-hydroxylated in some or all of the chains. Post-translationally, O-glycosylated on hydroxylated lysine residues. The O-linked glycan consists of a Glc-Gal disaccharide.

It localises to the secreted. Its subcellular location is the extracellular space. The protein localises to the extracellular matrix. Type II collagen is specific for cartilaginous tissues. It is essential for the normal embryonic development of the skeleton, for linear growth and for the ability of cartilage to resist compressive forces. The polypeptide is Collagen alpha-1(II) chain (Mus musculus (Mouse)).